The primary structure comprises 106 residues: Starvation responsive small protein A (106 aa).

A helical transmembrane segment spans residues 15–32 (ILLVNAGLISAYGVRIIF).

Its subcellular location is the cell membrane. Functionally, involved in starvation response and aggregation stage of the life cycle. May be involved in fruiting body morphogenesis and spore formation. The polypeptide is Starvation responsive small protein A (Dictyostelium discoideum (Social amoeba)).